The sequence spans 531 residues: Phosphoinositide phospholipase C 9 (531 aa).

In terms of domain architecture, PI-PLC X-box spans 107 to 253 (RDMNAPLSHY…LQNKILISRR (147 aa)). The 121-residue stretch at 265 to 385 (ENGVELEIQE…GYVKKPNFLL (121 aa)) folds into the PI-PLC Y-box domain. Position 276 is a phosphoserine (serine 276). A C2 domain is found at 386-513 (NAGSSGVFYP…EGIRAVPLYD (128 aa)).

Ca(2+) serves as cofactor. Expressed in leaves, roots, flowers and siliques.

The protein localises to the cell membrane. The catalysed reaction is a 1,2-diacyl-sn-glycero-3-phospho-(1D-myo-inositol-4,5-bisphosphate) + H2O = 1D-myo-inositol 1,4,5-trisphosphate + a 1,2-diacyl-sn-glycerol + H(+). Its function is as follows. The production of the second messenger molecules diacylglycerol (DAG) and inositol 1,4,5-trisphosphate (IP3) is mediated by activated phosphatidylinositol-specific phospholipase C enzymes. This chain is Phosphoinositide phospholipase C 9 (PLC9), found in Arabidopsis thaliana (Mouse-ear cress).